Here is a 960-residue protein sequence, read N- to C-terminus: Chromosome transmission fidelity protein 18 (960 aa).

Disordered stretches follow at residues 56 to 79 (DLFH…STLD) and 91 to 113 (DISE…YPNT). Polar residues predominate over residues 58–69 (FHSSQPVGSPTR). 423–430 (GLAGAGKT) lines the ATP pocket.

The protein belongs to the activator 1 small subunits family. CTF18 subfamily. As to quaternary structure, component of the ctf18-RFC complex which consists of ctf18, ctf8, dcc1, rfc2, rfc3, rfc4 and rfc5.

It localises to the nucleus. Its function is as follows. Essential for the fidelity of chromosome transmission. Required for the DNA replication block checkpoint. Replication factor C (RFC) complex has an essential but redundant activity in sister chromatid cohesion establishment. Acts as a PCNA loader, loading PCNA onto primed templates. An RFC-like complex (ctf18-RFC) is formed where ctf18 replaces rfc1 in the RFC complex along with the association of dcc1 and ctf8. This complex is required for efficient establishment of chromosome cohesion during S-phase. This is Chromosome transmission fidelity protein 18 (ctf18) from Schizosaccharomyces pombe (strain 972 / ATCC 24843) (Fission yeast).